Reading from the N-terminus, the 100-residue chain is Protein SAMBA (100 aa).

Residues 1–40 (MNGASPAHSLVSTTAVAGGGGSSGAAAGLDDFHFPPDIPS) are disordered.

As to quaternary structure, interacts with CDC27B and CYCA2-3. Expressed in embryos, germinating seeds, hypocotyls and pollen grains.

In terms of biological role, plays an important role in organ size control. Acts as negative regulator of the anaphase-promoting complex/cyclosome (APC/C). Regulates cell proliferation during early development by targeting CYCA2-3 for APC/C-mediated degradation. Required for mitosis I during pollen microspore development. This chain is Protein SAMBA, found in Arabidopsis thaliana (Mouse-ear cress).